Consider the following 482-residue polypeptide: tRNA sulfurtransferase (482 aa).

One can recognise a THUMP domain in the interval 61 to 165 (AQYLETLACI…NDELYIISAV (105 aa)). Residues 183–184 (LL), K265, G287, and Q296 each bind ATP. The cysteines at positions 344 and 456 are disulfide-linked. Residues 404-482 (LAADEVILDI…GFDNVKVYRP (79 aa)) form the Rhodanese domain. The active-site Cysteine persulfide intermediate is the C456.

This sequence belongs to the ThiI family.

The protein localises to the cytoplasm. The enzyme catalyses [ThiI sulfur-carrier protein]-S-sulfanyl-L-cysteine + a uridine in tRNA + 2 reduced [2Fe-2S]-[ferredoxin] + ATP + H(+) = [ThiI sulfur-carrier protein]-L-cysteine + a 4-thiouridine in tRNA + 2 oxidized [2Fe-2S]-[ferredoxin] + AMP + diphosphate. It catalyses the reaction [ThiS sulfur-carrier protein]-C-terminal Gly-Gly-AMP + S-sulfanyl-L-cysteinyl-[cysteine desulfurase] + AH2 = [ThiS sulfur-carrier protein]-C-terminal-Gly-aminoethanethioate + L-cysteinyl-[cysteine desulfurase] + A + AMP + 2 H(+). The protein operates within cofactor biosynthesis; thiamine diphosphate biosynthesis. Its function is as follows. Catalyzes the ATP-dependent transfer of a sulfur to tRNA to produce 4-thiouridine in position 8 of tRNAs, which functions as a near-UV photosensor. Also catalyzes the transfer of sulfur to the sulfur carrier protein ThiS, forming ThiS-thiocarboxylate. This is a step in the synthesis of thiazole, in the thiamine biosynthesis pathway. The sulfur is donated as persulfide by IscS. The sequence is that of tRNA sulfurtransferase from Aeromonas salmonicida (strain A449).